Here is a 305-residue protein sequence, read N- to C-terminus: Methionyl-tRNA formyltransferase (305 aa).

111–114 (SLLP) lines the (6S)-5,6,7,8-tetrahydrofolate pocket.

The protein belongs to the Fmt family.

It carries out the reaction L-methionyl-tRNA(fMet) + (6R)-10-formyltetrahydrofolate = N-formyl-L-methionyl-tRNA(fMet) + (6S)-5,6,7,8-tetrahydrofolate + H(+). Attaches a formyl group to the free amino group of methionyl-tRNA(fMet). The formyl group appears to play a dual role in the initiator identity of N-formylmethionyl-tRNA by promoting its recognition by IF2 and preventing the misappropriation of this tRNA by the elongation apparatus. The chain is Methionyl-tRNA formyltransferase from Campylobacter jejuni subsp. jejuni serotype O:23/36 (strain 81-176).